We begin with the raw amino-acid sequence, 211 residues long: Outer-membrane lipoprotein carrier protein (211 aa).

An N-terminal signal peptide occupies residues 1–24; it reads MNTIKILIGLLGIFLFSLSGIVSA.

The protein belongs to the LolA family. In terms of assembly, monomer.

It is found in the periplasm. Participates in the translocation of lipoproteins from the inner membrane to the outer membrane. Only forms a complex with a lipoprotein if the residue after the N-terminal Cys is not an aspartate (The Asp acts as a targeting signal to indicate that the lipoprotein should stay in the inner membrane). The sequence is that of Outer-membrane lipoprotein carrier protein from Coxiella burnetii (strain RSA 331 / Henzerling II).